The sequence spans 573 residues: Peptidyl-prolyl cis-trans isomerase-like 2 (573 aa).

The U-box domain maps to 37–119 (QRLPFDCCAL…GNLHDPITYK (83 aa)). A disordered region spans residues 223 to 247 (KNKSGQSPAPTPSKIDDGKGQEKKE). Residues 236-247 (KIDDGKGQEKKE) show a composition bias toward basic and acidic residues. A PPIase cyclophilin-type domain is found at 312–469 (SKAYATITTN…RDIVIQGVTV (158 aa)). The span at 489–510 (DQSDAALKRRAEAQKEREKDRT) shows a compositional bias: basic and acidic residues. The disordered stretch occupies residues 489 to 515 (DQSDAALKRRAEAQKEREKDRTTWLGT).

It belongs to the cyclophilin-type PPIase family. PPIL2 subfamily.

The protein resides in the nucleus. The enzyme catalyses [protein]-peptidylproline (omega=180) = [protein]-peptidylproline (omega=0). The catalysed reaction is S-ubiquitinyl-[E2 ubiquitin-conjugating enzyme]-L-cysteine + [acceptor protein]-L-lysine = [E2 ubiquitin-conjugating enzyme]-L-cysteine + N(6)-ubiquitinyl-[acceptor protein]-L-lysine.. The protein operates within protein modification; protein ubiquitination. In terms of biological role, may catalyze the cis-trans isomerization of proline imidic peptide bonds in oligopeptides thereby assisting the folding of proteins. May also function as a chaperone, playing a role in intracellular transport of proteins. May also have a protein ubiquitin ligase activity acting as an E3 ubiquitin protein ligase or as a ubiquitin-ubiquitin ligase promoting elongation of ubiquitin chains on proteins. This Cryptococcus neoformans var. neoformans serotype D (strain B-3501A) (Filobasidiella neoformans) protein is Peptidyl-prolyl cis-trans isomerase-like 2 (CYP8).